Here is a 350-residue protein sequence, read N- to C-terminus: DNA polymerase IV (350 aa).

A UmuC domain is found at 6 to 187 (IIHIDMDAFY…LPVEKIFGIG (182 aa)). Mg(2+)-binding residues include D10 and D105. Residue E106 is part of the active site.

This sequence belongs to the DNA polymerase type-Y family. As to quaternary structure, monomer. Mg(2+) serves as cofactor.

It localises to the cytoplasm. It carries out the reaction DNA(n) + a 2'-deoxyribonucleoside 5'-triphosphate = DNA(n+1) + diphosphate. Poorly processive, error-prone DNA polymerase involved in untargeted mutagenesis. Copies undamaged DNA at stalled replication forks, which arise in vivo from mismatched or misaligned primer ends. These misaligned primers can be extended by PolIV. Exhibits no 3'-5' exonuclease (proofreading) activity. May be involved in translesional synthesis, in conjunction with the beta clamp from PolIII. The polypeptide is DNA polymerase IV (Protochlamydia amoebophila (strain UWE25)).